The chain runs to 89 residues: Teretoxin Tan22.12 (89 aa).

A signal peptide spans 1 to 22; it reads MKVLFTLAMIVVTLCLGQRMRR.

It belongs to the teretoxin C (TC) superfamily. Contains 4 disulfide bonds. In terms of tissue distribution, expressed by the venom duct.

The protein resides in the secreted. The sequence is that of Teretoxin Tan22.12 from Terebra anilis (Auger snail).